The sequence spans 405 residues: Acetylornithine/succinyldiaminopimelate aminotransferase (405 aa).

Residues 108–109 (GT) and Phe-141 contribute to the pyridoxal 5'-phosphate site. N(2)-acetyl-L-ornithine is bound at residue Arg-144. Residue 226-229 (DEVQ) coordinates pyridoxal 5'-phosphate. N6-(pyridoxal phosphate)lysine is present on Lys-255. Ser-283 contacts N(2)-acetyl-L-ornithine. Residue Thr-284 coordinates pyridoxal 5'-phosphate.

The protein belongs to the class-III pyridoxal-phosphate-dependent aminotransferase family. ArgD subfamily. Homodimer. The cofactor is pyridoxal 5'-phosphate.

Its subcellular location is the cytoplasm. The enzyme catalyses N(2)-acetyl-L-ornithine + 2-oxoglutarate = N-acetyl-L-glutamate 5-semialdehyde + L-glutamate. It catalyses the reaction N-succinyl-(2S,6S)-2,6-diaminopimelate + 2-oxoglutarate = (S)-2-succinylamino-6-oxoheptanedioate + L-glutamate. It participates in amino-acid biosynthesis; L-arginine biosynthesis; N(2)-acetyl-L-ornithine from L-glutamate: step 4/4. Its pathway is amino-acid biosynthesis; L-lysine biosynthesis via DAP pathway; LL-2,6-diaminopimelate from (S)-tetrahydrodipicolinate (succinylase route): step 2/3. In terms of biological role, involved in both the arginine and lysine biosynthetic pathways. In Salmonella typhi, this protein is Acetylornithine/succinyldiaminopimelate aminotransferase.